Reading from the N-terminus, the 326-residue chain is Glutamine synthetase (326 aa).

Residues 4–85 (FKLEYIWLDG…VMCEVMMPDG (82 aa)) form the GS beta-grasp domain. In terms of domain architecture, GS catalytic spans 83-326 (PDGHAHASNA…GDPYQIVRRF (244 aa)). The Mg(2+) site is built by E107 and E109. E164 contacts ATP. Mg(2+)-binding residues include E169 and E176. L-glutamate is bound at residue E275.

This sequence belongs to the glutamine synthetase family. As to quaternary structure, homooctamer and homotetramer. Requires Mg(2+) as cofactor.

The protein resides in the cytoplasm. It catalyses the reaction L-glutamate + NH4(+) + ATP = L-glutamine + ADP + phosphate + H(+). Its activity is regulated as follows. Transferase activity is inhibited by NH(4)Cl. Its function is as follows. Catalyzes the ATP-dependent biosynthesis of glutamine from glutamate and ammonia. This chain is Glutamine synthetase, found in Rhizobium leguminosarum bv. phaseoli.